Reading from the N-terminus, the 1668-residue chain is Chitin synthase chs-2 (1668 aa).

The span at 1–19 (MMNTLDHRPLGRMETMEGK) shows a compositional bias: basic and acidic residues. The segment at 1–51 (MMNTLDHRPLGRMETMEGKPDEDEVPTSSNSDAKGKGYYYSSGTVPTDDST) is disordered. Topologically, residues 1 to 116 (MMNTLDHRPL…HGFWHDASLQ (116 aa)) are cytoplasmic. The chain crosses the membrane as a helical span at residues 117 to 137 (VLKLATFLVLFLLTLGSAVVA). Residues 138–176 (KSTFILMTSAIGWGGQTITICNQVISEATQNTVKLKNAH) lie on the Extracellular side of the membrane. Residues 177–197 (VVKWVWATLLALSAPEALCFV) form a helical membrane-spanning segment. Topologically, residues 198 to 212 (RSMHRTMFRNVKRPT) are cytoplasmic. A helical membrane pass occupies residues 213–233 (FIQFVFVLIIETFHSIGVGIL). Topologically, residues 234-242 (VFRIFPDLD) are extracellular. The chain crosses the membrane as a helical span at residues 243 to 263 (AVTAAQLTNAMCFVPAILSVI). The Cytoplasmic portion of the chain corresponds to 264-271 (SRKPNKSA). Residues 272-292 (LLLVIIDFAAIAAQSSGFWAL) form a helical membrane-spanning segment. Residues 293–301 (PMFLPNLQK) are Extracellular-facing. Residues 302–322 (HLVAIPVSLTLISLAWWQNFV) form a helical membrane-spanning segment. Over 323–347 (HRDSVFPPVRTLAKFAQRLSERRSK) the chain is Cytoplasmic. The helical transmembrane segment at 348–368 (TYAFVSLWKICIYVVCCFLFI) threads the bilayer. At 369–487 (SSRMKIEDML…IYSNYVERNQ (119 aa)) the chain is on the extracellular side. Residue Asn396 is glycosylated (N-linked (GlcNAc...) asparagine). Residues 488–508 (LTMAYDALWLVIFQFGAVFVC) traverse the membrane as a helical segment. Residues 509-522 (YHSSKFACKVMMQR) lie on the Cytoplasmic side of the membrane. The chain crosses the membrane as a helical span at residues 523–543 (MGFALPMALSVPVTVLLLSTN). The Extracellular segment spans residues 544 to 576 (CRMRQKDSCYGTNVLTVELFWQCNGASMSLADF). Residues 577–597 (ILTPQTWIWLCWLASQFWITI) form a helical membrane-spanning segment. The Cytoplasmic segment spans residues 598–1045 (HLWNPKHERL…ISIWYIIYQL (448 aa)). Residues 1046-1066 (VMLISSILGPGTIFVMIIGAI) form a helical membrane-spanning segment. At 1067–1074 (SISFSIDT) the chain is on the extracellular side. Residues 1075 to 1095 (LISLVIVSIPVVVFIVVCLTA) traverse the membrane as a helical segment. Over 1096–1100 (KPEHQ) the chain is Cytoplasmic. The chain crosses the membrane as a helical span at residues 1101 to 1121 (LICAQTIGAIFAMLMTAVVVG). Topologically, residues 1122–1136 (TSLQLQKDGLLSPHS) are extracellular. A helical membrane pass occupies residues 1137 to 1157 (MFTVAVATSFLTAAILHPLEF). A topological domain (cytoplasmic) is located at residue Thr1158. The chain crosses the membrane as a helical span at residues 1159–1179 (CIIPGTIYFLAIPCMYMLLPI). Residues 1180–1375 (YSVCNMHTVS…RAGLIAIRNS (196 aa)) are Extracellular-facing. Residues 1192-1216 (TREDPRPTEKNTLAKKTPGNLESGD) form a disordered region. Residues 1280 to 1335 (QIDKCSEADEDEQAEIEDALEMSNQSHAAKKNQKWKQAQSEAWLADKALKRAEREY) adopt a coiled-coil conformation. Asn1303 carries N-linked (GlcNAc...) asparagine glycosylation. Residues 1376–1396 (HTVYFLMINIVFIISVLVLQI) traverse the membrane as a helical segment. The Cytoplasmic portion of the chain corresponds to 1397 to 1440 (HKDCLNIEWPLGPKFNHTVRPCYANHDDNQKEEVWVMTRLQLEP). The helical transmembrane segment at 1441–1461 (IGLVFLIFFVSILVIQFLAML) threads the bilayer. Topologically, residues 1462 to 1668 (CHRFGTLAHI…SSGDVELRRF (207 aa)) are extracellular. Residues 1625–1668 (RLFTAQQDQNSPTSDGNRRKSNSRPWDQPTSSATSSGDVELRRF) are disordered. Polar residues-rich tracts occupy residues 1628 to 1639 (TAQQDQNSPTSD) and 1647 to 1661 (SRPWDQPTSSATSSG).

This sequence belongs to the chitin synthase family. Class IV subfamily.

The protein resides in the cell membrane. It carries out the reaction [(1-&gt;4)-N-acetyl-beta-D-glucosaminyl](n) + UDP-N-acetyl-alpha-D-glucosamine = [(1-&gt;4)-N-acetyl-beta-D-glucosaminyl](n+1) + UDP + H(+). May be involved in chitin synthesis in the pharynx during larval development. The polypeptide is Chitin synthase chs-2 (Caenorhabditis elegans).